A 631-amino-acid polypeptide reads, in one-letter code: Eukaryotic translation initiation factor 3 subunit L (631 aa).

Positions 335-526 constitute a PCI domain; it reads TFVSVLIFFI…AETTLLDGER (192 aa). The tract at residues 571-631 is disordered; sequence KSAPLPVRKP…PKSRQARIAA (61 aa). The segment covering 580–612 has biased composition (low complexity); it reads PASSSAPAPATTAAPISKSGESAAPAPAEAPAA.

This sequence belongs to the eIF-3 subunit L family. As to quaternary structure, component of the eukaryotic translation initiation factor 3 (eIF-3) complex.

The protein localises to the cytoplasm. In terms of biological role, component of the eukaryotic translation initiation factor 3 (eIF-3) complex, which is involved in protein synthesis of a specialized repertoire of mRNAs and, together with other initiation factors, stimulates binding of mRNA and methionyl-tRNAi to the 40S ribosome. The eIF-3 complex specifically targets and initiates translation of a subset of mRNAs involved in cell proliferation. The polypeptide is Eukaryotic translation initiation factor 3 subunit L (Cryptococcus neoformans var. neoformans serotype D (strain B-3501A) (Filobasidiella neoformans)).